The chain runs to 152 residues: Succinate dehydrogenase [ubiquinone] cytochrome b small subunit B, mitochondrial (152 aa).

Residues 1-21 constitute a mitochondrion transit peptide; the sequence is MATLLRVSSLCRANRASAFKS. Over 22-56 the chain is Mitochondrial matrix; sequence LLIRPLPCLSQDLHMVQTSQIHTSPNHHAGSKAAS. Residues 57 to 78 form a helical membrane-spanning segment; it reads MHWTGERALSVALLGLLPAAYL. Topologically, residues 79-83 are mitochondrial intermembrane; sequence YPGAA. Residues 84–104 form a helical membrane-spanning segment; that stretch reads MDYSLAAALTLHGHWGLGQVV. His95 lines the heme b pocket. Over 105 to 113 the chain is Mitochondrial matrix; sequence TDYVHGETK. An a ubiquinone-binding site is contributed by Tyr107. The chain crosses the membrane as a helical span at residues 114–135; it reads IKMANTSLFALSALTFAGLCYF. The Mitochondrial intermembrane portion of the chain corresponds to 136–152; that stretch reads NYHDVGICKAVAMLWSL.

It belongs to the CybS family. As to quaternary structure, component of complex II composed of four subunits: the flavoprotein (FP) SDHA, iron-sulfur protein (IP) SDHB, and a cytochrome b560 composed of SDHC and SDHD.

The protein localises to the mitochondrion inner membrane. It functions in the pathway carbohydrate metabolism; tricarboxylic acid cycle. Its function is as follows. Membrane-anchoring subunit of succinate dehydrogenase (SDH) that is involved in complex II of the mitochondrial electron transport chain and is responsible for transferring electrons from succinate to ubiquinone (coenzyme Q). SDH also oxidizes malate to the non-canonical enol form of oxaloacetate, enol-oxaloacetate. Enol-oxaloacetate, which is a potent inhibitor of the succinate dehydrogenase activity, is further isomerized into keto-oxaloacetate. This chain is Succinate dehydrogenase [ubiquinone] cytochrome b small subunit B, mitochondrial (sdhd-b), found in Xenopus laevis (African clawed frog).